The sequence spans 125 residues: MSGRGKGGKAKAKAKSRSSRAGLQFPVGRIHRLLRKGNYAGRVGAGAPVYLAAVLEYLAAEVLELAGNAARDNKKSRIIPRHLQLAIRNDEELNKLLSGVTIAQGGVLPNIQAVLLPKKTQKAAK.

The span at 1–18 (MSGRGKGGKAKAKAKSRS) shows a compositional bias: basic residues. The segment at 1 to 21 (MSGRGKGGKAKAKAKSRSSRA) is disordered. Serine 2 is modified (N-acetylserine). Glutamine 104 is subject to N5-methylglutamine.

This sequence belongs to the histone H2A family. The nucleosome is a histone octamer containing two molecules each of H2A, H2B, H3 and H4 assembled in one H3-H4 heterotetramer and two H2A-H2B heterodimers. The octamer wraps approximately 147 bp of DNA.

The protein localises to the nucleus. It is found in the chromosome. Functionally, core component of nucleosome. Nucleosomes wrap and compact DNA into chromatin, limiting DNA accessibility to the cellular machineries which require DNA as a template. Histones thereby play a central role in transcription regulation, DNA repair, DNA replication and chromosomal stability. DNA accessibility is regulated via a complex set of post-translational modifications of histones, also called histone code, and nucleosome remodeling. The protein is Histone H2A of Mytilus trossulus (Blue mussel).